The primary structure comprises 338 residues: Clathrin light chain 1 (338 aa).

The disordered stretch occupies residues 1 to 111 (MATFDDGDFP…NEMREEGFQR (111 aa)). 2 stretches are compositionally biased toward polar residues: residues 29-47 (SEAQ…SSFN) and 61-73 (SSPN…PFES). A compositionally biased stretch (basic and acidic residues) spans 102–111 (NEMREEGFQR). An involved in binding clathrin heavy chain region spans residues 102–163 (NEMREEGFQR…TIETNKTDNR (62 aa)). A coiled-coil region spans residues 122–142 (LEEKEKKEKEMRNQIITEAED). The tract at residues 192–338 (IPREVPNIEK…VTEAEGTKAE (147 aa)) is disordered. Residues 197-212 (PNIEKKRGKKDPDKKP) are compositionally biased toward basic and acidic residues. A compositionally biased stretch (pro residues) spans 241–253 (NPPPHMMPPPPPA). The span at 254–304 (KDAKDGKDAKDGKDAKTGKDGKDAKGGKDAKDLKDGKPADPKVTEEKRPSP) shows a compositional bias: basic and acidic residues.

This sequence belongs to the clathrin light chain family. Clathrin coats are formed from molecules containing 3 heavy chains and 3 light chains.

The protein localises to the cytoplasmic vesicle membrane. The protein resides in the membrane. Its subcellular location is the coated pit. Clathrin is the major protein of the polyhedral coat of coated pits and vesicles. The protein is Clathrin light chain 1 of Arabidopsis thaliana (Mouse-ear cress).